Consider the following 973-residue polypeptide: EF-hand calcium-binding domain-containing protein 13 (973 aa).

Residues 384-448 (YSKNGINFKK…HSSLQKQVSS (65 aa)) form a disordered region. Residues 396–405 (EKGEIHDSKS) are compositionally biased toward basic and acidic residues. Low complexity predominate over residues 406-418 (KPQSLKSSTSLSK). 6 consecutive EF-hand domains span residues 488–523 (LLDEEFQKIVTDTSRNENGMVELDDFVNALAKERSF), 524–559 (PECNALPGVIKAIDKIKDKNVDYEDLNTCLQNFGIY), 633–668 (LKKDEFLAALELVTVDEGDKVQFEEFAKVVRNMRDA), 756–791 (PKVNEIKEAANILSHVDNGKIGIPDLEHALKCLNVN), 792–827 (LTEEDFNEALNCCNVSDNMEVDLKDFLMKMKESPHF), and 864–899 (TANAILTVMLRHVPEHESGKVSIQEFMTKLSDILTI).

The protein is EF-hand calcium-binding domain-containing protein 13 (EFCAB13) of Homo sapiens (Human).